We begin with the raw amino-acid sequence, 161 residues long: Large-conductance mechanosensitive channel (161 aa).

The next 2 membrane-spanning stretches (helical) occupy residues 14–34 (VVDM…VNTL) and 85–105 (GLFL…FILV).

Belongs to the MscL family. As to quaternary structure, homopentamer.

The protein resides in the cell inner membrane. Its function is as follows. Channel that opens in response to stretch forces in the membrane lipid bilayer. May participate in the regulation of osmotic pressure changes within the cell. The polypeptide is Large-conductance mechanosensitive channel (Chlorobium luteolum (strain DSM 273 / BCRC 81028 / 2530) (Pelodictyon luteolum)).